A 468-amino-acid polypeptide reads, in one-letter code: Ammonium transporter Amt2 (468 aa).

The next 12 membrane-spanning stretches (helical) occupy residues M1–A21, F39–L59, L77–G97, L123–A143, A156–L176, F194–L214, L236–G256, I268–T288, V297–W317, W321–L341, V350–F370, and L400–I420.

Belongs to the ammonia transporter channel (TC 1.A.11.2) family. Homotrimer.

It localises to the cell membrane. Its function is as follows. Involved in the uptake of ammonium/ammonia (NH(4)(+)/NH(3)). Transport is electrogenic. The polypeptide is Ammonium transporter Amt2 (Archaeoglobus fulgidus (strain ATCC 49558 / DSM 4304 / JCM 9628 / NBRC 100126 / VC-16)).